The primary structure comprises 347 residues: Holliday junction branch migration complex subunit RuvB (347 aa).

The large ATPase domain (RuvB-L) stretch occupies residues 1–186 (MKDENSISFL…FGITARFELY (186 aa)). ATP contacts are provided by residues Leu-25, Arg-26, Gly-67, Lys-70, Thr-71, Thr-72, 133 to 135 (EDY), Arg-176, Tyr-186, and Arg-223. Residue Thr-71 coordinates Mg(2+). A small ATPAse domain (RuvB-S) region spans residues 187–257 (SEIELVEIIK…IVSIGLEMLR (71 aa)). A head domain (RuvB-H) region spans residues 260–347 (GEGLDEQDRN…GLNENQRVSF (88 aa)). 2 residues coordinate DNA: Arg-315 and Arg-320.

Belongs to the RuvB family. In terms of assembly, homohexamer. Forms an RuvA(8)-RuvB(12)-Holliday junction (HJ) complex. HJ DNA is sandwiched between 2 RuvA tetramers; dsDNA enters through RuvA and exits via RuvB. An RuvB hexamer assembles on each DNA strand where it exits the tetramer. Each RuvB hexamer is contacted by two RuvA subunits (via domain III) on 2 adjacent RuvB subunits; this complex drives branch migration. In the full resolvosome a probable DNA-RuvA(4)-RuvB(12)-RuvC(2) complex forms which resolves the HJ.

The protein resides in the cytoplasm. It carries out the reaction ATP + H2O = ADP + phosphate + H(+). In terms of biological role, the RuvA-RuvB-RuvC complex processes Holliday junction (HJ) DNA during genetic recombination and DNA repair, while the RuvA-RuvB complex plays an important role in the rescue of blocked DNA replication forks via replication fork reversal (RFR). RuvA specifically binds to HJ cruciform DNA, conferring on it an open structure. The RuvB hexamer acts as an ATP-dependent pump, pulling dsDNA into and through the RuvAB complex. RuvB forms 2 homohexamers on either side of HJ DNA bound by 1 or 2 RuvA tetramers; 4 subunits per hexamer contact DNA at a time. Coordinated motions by a converter formed by DNA-disengaged RuvB subunits stimulates ATP hydrolysis and nucleotide exchange. Immobilization of the converter enables RuvB to convert the ATP-contained energy into a lever motion, pulling 2 nucleotides of DNA out of the RuvA tetramer per ATP hydrolyzed, thus driving DNA branch migration. The RuvB motors rotate together with the DNA substrate, which together with the progressing nucleotide cycle form the mechanistic basis for DNA recombination by continuous HJ branch migration. Branch migration allows RuvC to scan DNA until it finds its consensus sequence, where it cleaves and resolves cruciform DNA. This chain is Holliday junction branch migration complex subunit RuvB, found in Borreliella burgdorferi (strain ATCC 35210 / DSM 4680 / CIP 102532 / B31) (Borrelia burgdorferi).